The following is a 119-amino-acid chain: uncharacterized protein (119 aa).

Positions Gln6–Leu36 form a coiled coil. Positions Ala95–Gly119 are disordered.

This is an uncharacterized protein from Frog virus 3 (isolate Goorha) (FV-3).